Here is a 116-residue protein sequence, read N- to C-terminus: Vesicle-associated membrane protein 2 (116 aa).

The interval 1–33 (MSATAATAPPAAPAGEGGPPAPPPNLTSNRRLQ) is disordered. Residue S2 is modified to N-acetylserine. The Cytoplasmic segment spans residues 2–94 (SATAATAPPA…KRKYWWKNLK (93 aa)). The region spanning 31–91 (RLQQTQAQVD…AKLKRKYWWK (61 aa)) is the v-SNARE coiled-coil homology domain. Residues 92-116 (NLKMMIILGVICAIILIIIIVYFST) form a required for interaction with SEPT8 region. Residues 95–114 (MMIILGVICAIILIIIIVYF) traverse the membrane as a helical; Anchor for type IV membrane protein segment. Residues 115–116 (ST) are Vesicular-facing.

Belongs to the synaptobrevin family. In terms of assembly, part of the SNARE core complex containing SNAP25, VAMP2 and STX1A; this complex constitutes the basic catalytic machinery of the complex neurotransmitter release apparatus. Recruited to the SNARE complex following binding of the SNARE complex component STX1A to STXBP1. This complex binds to CPLX1. Interacts with POPDC1 and STX4. Interacts with VAPA and VAPB. Interacts with WDFY2, PRKCZ and PRKCI. Forms a complex with WDFY2 and PRKCZ. Interacts (via N-terminus) with KCNB1 (via N-terminus and C-terminus); stimulates the channel inactivation rate of KCNB1. Interacts with SEPT8; the interaction inhibits interaction of VAMP2 with SYP. Interacts with SYP; the interaction is inhibited by interaction with SEPT8. Interacts with PICALM. Interacts with alpha-synuclein/SNCA. Interacts with STX3. Phosphorylated by PRKCZ in vitro and this phosphorylation is increased in the presence of WDFY2. In terms of processing, (Microbial infection) Targeted and hydrolyzed by C.botulinum neurotoxin type B (BoNT/B, botB) which hydrolyzes the 76-Gln-|-Phe-77 bond and probably inhibits neurotransmitter release. Post-translationally, (Microbial infection) Targeted and hydrolyzed by C.botulinum neurotoxin type D (BoNT/D, botD) which probably hydrolyzes the 59-Lys-|-Leu-60 bond and inhibits neurotransmitter release. Note that humans are not known to be infected by C.botulinum type D. (Microbial infection) Targeted and hydrolyzed by C.botulinum neurotoxin type F (BoNT/F, botF) which hydrolyzes the 58-Gln-|-Lys-59 bond and probably inhibits neurotransmitter release. In terms of processing, (Microbial infection) Targeted and hydrolyzed by C.tetani tetanus toxin (tetX) which hydrolyzes the 76-Gln-|-Phe-77 bond and probably inhibits neurotransmitter release. Nervous system and skeletal muscle.

It is found in the cytoplasmic vesicle. It localises to the secretory vesicle. Its subcellular location is the synaptic vesicle membrane. The protein localises to the cell membrane. In terms of biological role, involved in the targeting and/or fusion of transport vesicles to their target membrane. Major SNARE protein of synaptic vesicles which mediates fusion of synaptic vesicles to release neurotransmitters. Essential for fast vesicular exocytosis and activity-dependent neurotransmitter release as well as fast endocytosis that mediates rapid reuse of synaptic vesicles. Modulates the gating characteristics of the delayed rectifier voltage-dependent potassium channel KCNB1. In Homo sapiens (Human), this protein is Vesicle-associated membrane protein 2.